Here is a 209-residue protein sequence, read N- to C-terminus: dITP/XTP pyrophosphatase (209 aa).

Residue 7–12 (SSHGYK) participates in substrate binding. Asp-70 acts as the Proton acceptor in catalysis. Asp-70 contributes to the Mg(2+) binding site. Substrate-binding positions include Ser-71, 154 to 157 (FGYD), Lys-177, and 182 to 183 (HR).

Belongs to the HAM1 NTPase family. Homodimer. The cofactor is Mg(2+).

It carries out the reaction XTP + H2O = XMP + diphosphate + H(+). It catalyses the reaction dITP + H2O = dIMP + diphosphate + H(+). The catalysed reaction is ITP + H2O = IMP + diphosphate + H(+). Its function is as follows. Pyrophosphatase that catalyzes the hydrolysis of nucleoside triphosphates to their monophosphate derivatives, with a high preference for the non-canonical purine nucleotides XTP (xanthosine triphosphate), dITP (deoxyinosine triphosphate) and ITP. Seems to function as a house-cleaning enzyme that removes non-canonical purine nucleotides from the nucleotide pool, thus preventing their incorporation into DNA/RNA and avoiding chromosomal lesions. This is dITP/XTP pyrophosphatase from Chlamydia muridarum (strain MoPn / Nigg).